A 1344-amino-acid chain; its full sequence is Period circadian protein homolog 2 (1344 aa).

Disordered stretches follow at residues 1 to 21 (MDCIEVRGFYSSTEEQNPEQQ) and 42 to 112 (EYSG…NGKD). The segment covering 10–21 (YSSTEEQNPEQQ) has biased composition (polar residues). Low complexity predominate over residues 78-89 (SSGSSGNDFSGN). A compositionally biased stretch (basic and acidic residues) spans 99–111 (HDSHGHESDENGK). A Nuclear export signal 1 motif is present at residues 161 to 170 (LLKTLQELKA). One can recognise a PAS 1 domain in the interval 231-298 (ITSEYIMKNA…FYTSTTPYRL (68 aa)). The LXXLL motif lies at 358–362 (LCCVL). A PAS 2 domain is found at 371 to 437 (YEAPRIPPDK…MLAIHKKILQ (67 aa)). The region spanning 445-488 (YSPIRFCTRNGDYITMDTSWSSFINPWSRKVSFIIGRHKVRTGP) is the PAC domain. The short motif at 512–521 (ITEQIYRLLL) is the Nuclear export signal 2 element. 5 disordered regions span residues 531–609 (GYGS…QVKD), 661–686 (AKRKCEPSSSVNSSVHEQKASVNAIQ), 823–894 (LQDK…WSPS), 1038–1065 (TETRNEPSRSCTPQSVGPQDQASPPLFQ), and 1107–1126 (TTDAGSGKGSLPAESPMDAQ). Residues 549-559 (SSSDSTGNNND) show a composition bias toward low complexity. Composition is skewed to basic and acidic residues over residues 560 to 573 (DTQKDKTISQDARK) and 583 to 597 (TENKGKLEYKREPSA). Residues 667 to 684 (PSSSVNSSVHEQKASVNA) are compositionally biased toward polar residues. Residues 825 to 836 (DKPKGRPGERGG) are compositionally biased toward basic and acidic residues. The Nuclear localization signal signature appears at 851-865 (KKSGKNRKSKRIKPQ). Residues 852 to 862 (KSGKNRKSKRI) are compositionally biased toward basic residues. Polar residues-rich tracts occupy residues 865 to 875 (QESSDSTTSGT), 885 to 894 (GLNTTAWSPS), and 1045 to 1059 (SRSCTPQSVGPQDQA). Positions 1138–1142 (LDILL) match the LXXLL motif. Residues 1149–1172 (GTGSASSGSGVSAAAESLGSGSNG) show a composition bias toward low complexity. The segment at 1149–1197 (GTGSASSGSGVSAAAESLGSGSNGCDMSGSRTGSSETSHTSKYFGSIDS) is disordered. Positions 1177–1197 (GSRTGSSETSHTSKYFGSIDS) are enriched in polar residues. A CRY binding domain region spans residues 1244–1344 (SRDLETVLKE…PLSQVNEEQT (101 aa)).

In terms of assembly, component of the circadian clock oscillator which includes the CRY proteins, CLOCK or NPAS2, BMAL1 or BMAL2, CSNK1E, and the PER proteins. Interacts directly with PER3, and through a C-terminal domain, with CRY1 and CRY2.

The protein resides in the nucleus. Its subcellular location is the cytoplasm. Its function is as follows. Transcriptional repressor which forms a core component of the circadian clock. The circadian clock, an internal time-keeping system, regulates various physiological processes through the generation of approximately 24 hour circadian rhythms in gene expression, which are translated into rhythms in metabolism and behavior. It is derived from the Latin roots 'circa' (about) and 'diem' (day) and acts as an important regulator of a wide array of physiological functions including metabolism, sleep, body temperature, blood pressure, endocrine, immune, cardiovascular, and renal function. Consists of two major components: the central clock, residing in the suprachiasmatic nucleus (SCN) of the brain, and the peripheral clocks that are present in nearly every tissue and organ system. Both the central and peripheral clocks can be reset by environmental cues, also known as Zeitgebers (German for 'timegivers'). The predominant Zeitgeber for the central clock is light, which is sensed by retina and signals directly to the SCN. The central clock entrains the peripheral clocks through neuronal and hormonal signals, body temperature and feeding-related cues, aligning all clocks with the external light/dark cycle. Circadian rhythms allow an organism to achieve temporal homeostasis with its environment at the molecular level by regulating gene expression to create a peak of protein expression once every 24 hours to control when a particular physiological process is most active with respect to the solar day. Transcription and translation of core clock components (CLOCK, NPAS2, BMAL1, BMAL2, PER1, PER2, PER3, CRY1 and CRY2) plays a critical role in rhythm generation, whereas delays imposed by post-translational modifications (PTMs) are important for determining the period (tau) of the rhythms (tau refers to the period of a rhythm and is the length, in time, of one complete cycle). A diurnal rhythm is synchronized with the day/night cycle, while the ultradian and infradian rhythms have a period shorter and longer than 24 hours, respectively. Disruptions in the circadian rhythms contribute to the pathology of cardiovascular diseases, cancer, metabolic syndrome and aging. A transcription/translation feedback loop (TTFL) forms the core of the molecular circadian clock mechanism. Transcription factors, CLOCK or NPAS2 and BMAL1 or BMAL2, form the positive limb of the feedback loop, act in the form of a heterodimer and activate the transcription of core clock genes and clock-controlled genes (involved in key metabolic processes), harboring E-box elements (5'-CACGTG-3') within their promoters. The core clock genes: PER1/2/3 and CRY1/2 which are transcriptional repressors form the negative limb of the feedback loop and interact with the CLOCK|NPAS2-BMAL1|BMAL2 heterodimer inhibiting its activity and thereby negatively regulating their own expression. This heterodimer also activates nuclear receptors NR1D1/2 and RORA/B/G, which form a second feedback loop and which activate and repress BMAL1 transcription, respectively. PER1 and PER2 proteins transport CRY1 and CRY2 into the nucleus with appropriate circadian timing, but also contribute directly to repression of clock-controlled target genes through interaction with several classes of RNA-binding proteins, helicases and others transcriptional repressors. PER appears to regulate circadian control of transcription by at least three different modes. First, interacts directly with the CLOCK-BMAL1 at the tail end of the nascent transcript peak to recruit complexes containing the SIN3-HDAC that remodel chromatin to repress transcription. Second, brings H3K9 methyltransferases such as SUV39H1 and SUV39H2 to the E-box elements of the circadian target genes, like PER2 itself or PER1. The recruitment of each repressive modifier to the DNA seems to be very precisely temporally orchestrated by the large PER complex, the deacetylases acting before than the methyltransferases. Additionally, large PER complexes are also recruited to the target genes 3' termination site through interactions with RNA-binding proteins and helicases that may play a role in transcription termination to regulate transcription independently of CLOCK-BMAL1 interactions. This Gallus gallus (Chicken) protein is Period circadian protein homolog 2 (PER2).